We begin with the raw amino-acid sequence, 595 residues long: Inactive metallocarboxypeptidase ecm14 (595 aa).

An N-terminal signal peptide occupies residues 1-22 (MYRPDHVFVILCAVFFTGQVTA). Positions 23–178 (VPAGTGITHP…MIYESQYPSR (156 aa)) are excised as a propeptide. Residues 206 to 527 (NYQPFPVILQ…NSVLVLGHFL (322 aa)) form the Peptidase M14 domain. Residues His270 and Glu273 each contribute to the Zn(2+) site. Residues 270–273 (HARE), Arg328, and 345–346 (DR) contribute to the substrate site. The cysteines at positions 339 and 362 are disulfide-linked. Asn386 carries an N-linked (GlcNAc...) asparagine glycan. Position 402 (His402) interacts with Zn(2+). 403-404 (SY) lines the substrate pocket.

Belongs to the peptidase M14 family. Zn(2+) serves as cofactor.

It is found in the vacuole. It localises to the secreted. Functionally, inactive carboxypeptidase that may play a role in cell wall organization and biogenesis. In Talaromyces marneffei (strain ATCC 18224 / CBS 334.59 / QM 7333) (Penicillium marneffei), this protein is Inactive metallocarboxypeptidase ecm14 (ecm14).